The primary structure comprises 245 residues: 2,3-bisphosphoglycerate-dependent phosphoglycerate mutase 1 (245 aa).

Residues 8-15, 21-22, R60, 87-90, K98, 114-115, and 183-184 each bind substrate; these read RHGQSLWN, TG, ERHY, RR, and GN. H9 functions as the Tele-phosphohistidine intermediate in the catalytic mechanism. The Proton donor/acceptor role is filled by E87.

This sequence belongs to the phosphoglycerate mutase family. BPG-dependent PGAM subfamily.

The catalysed reaction is (2R)-2-phosphoglycerate = (2R)-3-phosphoglycerate. It participates in carbohydrate degradation; glycolysis; pyruvate from D-glyceraldehyde 3-phosphate: step 3/5. In terms of biological role, catalyzes the interconversion of 2-phosphoglycerate and 3-phosphoglycerate. In Bacillus cereus (strain ATCC 10987 / NRS 248), this protein is 2,3-bisphosphoglycerate-dependent phosphoglycerate mutase 1.